A 292-amino-acid chain; its full sequence is tRNA pseudouridine synthase B (292 aa).

Asp-38 (nucleophile) is an active-site residue.

Belongs to the pseudouridine synthase TruB family. Type 1 subfamily.

It carries out the reaction uridine(55) in tRNA = pseudouridine(55) in tRNA. Responsible for synthesis of pseudouridine from uracil-55 in the psi GC loop of transfer RNAs. This Streptococcus gordonii (strain Challis / ATCC 35105 / BCRC 15272 / CH1 / DL1 / V288) protein is tRNA pseudouridine synthase B.